A 307-amino-acid chain; its full sequence is Transcription factor Sox-3 (307 aa).

The segment at M1–K41 is disordered. Positions G21 to G30 are enriched in gly residues. The HMG box DNA-binding region spans V40 to K108. Positions D259–P270 match the 9aaTAD motif.

As to quaternary structure, interacts with ctnnb1.

The protein localises to the nucleus. Its subcellular location is the cytoplasm. Functionally, transcription factor with sequence-specific DNA binding activity. Binds to the consensus sequence 5'-[AT][AT]CAA[AT]G-3', showing a preference for 5'-AACAAT-3' and 5'-AACAAAG-3'. Inhibits beta-catenin-mediated dorsal axis specification by binding to sites within the promoter of the beta-catenin-regulated gene nodal5. Maternally derived sox3 acts as a transcriptional repressor of nodal5 and nodal6 to restrict their expression to the vegetal hemisphere of early embryos and thus establish germ layer formation. Acts at multiple points to inhibit nodal signaling, repressing the expression of the other mesoderm-inducing nodal genes nodal, nodal2 and nodal4, and also acting downstream to induce expression of genes including trim33/ectodermin, ema and coco, whose products repress nodal signaling. This chain is Transcription factor Sox-3, found in Xenopus tropicalis (Western clawed frog).